Here is a 420-residue protein sequence, read N- to C-terminus: Serine hydroxymethyltransferase (420 aa).

(6S)-5,6,7,8-tetrahydrofolate-binding positions include L121 and 125-127; that span reads GHL. K230 carries the post-translational modification N6-(pyridoxal phosphate)lysine.

The protein belongs to the SHMT family. As to quaternary structure, homodimer. Requires pyridoxal 5'-phosphate as cofactor.

The protein localises to the cytoplasm. It catalyses the reaction (6R)-5,10-methylene-5,6,7,8-tetrahydrofolate + glycine + H2O = (6S)-5,6,7,8-tetrahydrofolate + L-serine. The protein operates within one-carbon metabolism; tetrahydrofolate interconversion. It functions in the pathway amino-acid biosynthesis; glycine biosynthesis; glycine from L-serine: step 1/1. Its function is as follows. Catalyzes the reversible interconversion of serine and glycine with tetrahydrofolate (THF) serving as the one-carbon carrier. This reaction serves as the major source of one-carbon groups required for the biosynthesis of purines, thymidylate, methionine, and other important biomolecules. Also exhibits THF-independent aldolase activity toward beta-hydroxyamino acids, producing glycine and aldehydes, via a retro-aldol mechanism. The sequence is that of Serine hydroxymethyltransferase from Streptomyces avermitilis (strain ATCC 31267 / DSM 46492 / JCM 5070 / NBRC 14893 / NCIMB 12804 / NRRL 8165 / MA-4680).